Consider the following 239-residue polypeptide: MKKFNTEEKIILAIDGLDIFQAKVLLERCPNIKWVKVGLELFTREGPSVIKILKNLNKKIFLDLKFHDIPNTMSAACYEVSKLGVDIISVHASAGSKALTASKKASLEGAKIATVNAPCVIGITVLTSLSSEEFQTDLDRKNSIEENVIRLAKLSFDAGLDGCVCSPLEAKILRSMYKNNFELITPGIRTNIQKKDDQNRIMTPFEAISNGSSKLVIGRAITKAKDPNKAFLDICESIC.

Residues Asp15, Lys36, 63–72, Thr127, Arg189, Gln198, Gly218, and Arg219 each bind substrate; that span reads DLKFHDIPNT. Lys65 functions as the Proton donor in the catalytic mechanism.

This sequence belongs to the OMP decarboxylase family. Type 1 subfamily. Homodimer.

It catalyses the reaction orotidine 5'-phosphate + H(+) = UMP + CO2. It participates in pyrimidine metabolism; UMP biosynthesis via de novo pathway; UMP from orotate: step 2/2. Catalyzes the decarboxylation of orotidine 5'-monophosphate (OMP) to uridine 5'-monophosphate (UMP). In Prochlorococcus marinus subsp. pastoris (strain CCMP1986 / NIES-2087 / MED4), this protein is Orotidine 5'-phosphate decarboxylase.